The primary structure comprises 535 residues: Keratin, type II cytoskeletal 79 (535 aa).

Over residues 1–12 the composition is skewed to polar residues; that stretch reads MRSSVSRQTYST. Residues 1-52 form a disordered region; it reads MRSSVSRQTYSTKGGFSSNSASGGSGSQARTSFSSVTVSRSSGSGGGAHCGP. A head region spans residues 1-141; that stretch reads MRSSVSRQTY…DPEIQRVRTQ (141 aa). Positions 32 to 42 are enriched in low complexity; the sequence is SFSSVTVSRSS. Residues 43–52 show a composition bias toward gly residues; the sequence is GSGGGAHCGP. Residues 142–177 form a coil 1A region; that stretch reads EREQIKTLNNKFASFIDKVRFLEQQNKVLETKWALL. The region spanning 142-457 is the IF rod domain; that stretch reads EREQIKTLNN…KLLESEESRM (316 aa). The linker 1 stretch occupies residues 178 to 198; that stretch reads QEQGQNLGVTRNNLEPLFEAY. The interval 199–290 is coil 1B; sequence LGSMRSTLDR…QLYEMELSQV (92 aa). Positions 291–314 are linker 12; sequence QTHVSNTNVVLSMDNNRNLDLDSI. The interval 315-453 is coil 2; the sequence is IAEVKAQYEL…ATYRKLLESE (139 aa). The tail stretch occupies residues 454–535; that stretch reads ESRMSGECPS…TTVKTSSQRY (82 aa).

This sequence belongs to the intermediate filament family. In terms of assembly, heterotetramer of two type I and two type II keratins. As to expression, expressed in skeletal muscle, skin and scalp, but not in any other tissues or organs examined.

The protein is Keratin, type II cytoskeletal 79 (KRT79) of Homo sapiens (Human).